A 523-amino-acid chain; its full sequence is Probable FAD synthase (523 aa).

The segment at 20–111 (AIVVIGDEIL…TDQLHFSDEI (92 aa)) is molybdenum cofactor biosynthesis protein-like. Residues 332–489 (QIALSFNGGK…SLGGRDNTVK (158 aa)) are FAD synthase.

It in the N-terminal section; belongs to the MoaB/Mog family. In the C-terminal section; belongs to the PAPS reductase family. FAD1 subfamily. Requires Mg(2+) as cofactor.

It carries out the reaction FMN + ATP + H(+) = FAD + diphosphate. It functions in the pathway cofactor biosynthesis; FAD biosynthesis; FAD from FMN: step 1/1. Functionally, catalyzes the adenylation of flavin mononucleotide (FMN) to form flavin adenine dinucleotide (FAD) coenzyme. The polypeptide is Probable FAD synthase (Caenorhabditis briggsae).